Consider the following 339-residue polypeptide: Phosphoribosylformylglycinamidine cyclo-ligase (339 aa).

This sequence belongs to the AIR synthase family.

The protein localises to the cytoplasm. The catalysed reaction is 2-formamido-N(1)-(5-O-phospho-beta-D-ribosyl)acetamidine + ATP = 5-amino-1-(5-phospho-beta-D-ribosyl)imidazole + ADP + phosphate + H(+). Its pathway is purine metabolism; IMP biosynthesis via de novo pathway; 5-amino-1-(5-phospho-D-ribosyl)imidazole from N(2)-formyl-N(1)-(5-phospho-D-ribosyl)glycinamide: step 2/2. This Streptococcus thermophilus (strain ATCC BAA-250 / LMG 18311) protein is Phosphoribosylformylglycinamidine cyclo-ligase.